The sequence spans 43 residues: Protein PsbN (43 aa).

A helical transmembrane segment spans residues 7-27 (VAIFISGLLVSFTGYALYTAF).

The protein belongs to the PsbN family.

It localises to the plastid. The protein resides in the chloroplast thylakoid membrane. In terms of biological role, may play a role in photosystem I and II biogenesis. The protein is Protein PsbN of Sagittaria latifolia (Broadleaf arrowhead).